The following is a 404-amino-acid chain: Cysteine desulfurase IscS (404 aa).

Residues 75–76 (AT), asparagine 155, glutamine 183, and 203–205 (SAH) each bind pyridoxal 5'-phosphate. At lysine 206 the chain carries N6-(pyridoxal phosphate)lysine. A pyridoxal 5'-phosphate-binding site is contributed by threonine 243. The active-site Cysteine persulfide intermediate is the cysteine 328. A [2Fe-2S] cluster-binding site is contributed by cysteine 328.

This sequence belongs to the class-V pyridoxal-phosphate-dependent aminotransferase family. NifS/IscS subfamily. As to quaternary structure, homodimer. Forms a heterotetramer with IscU, interacts with other sulfur acceptors. It depends on pyridoxal 5'-phosphate as a cofactor.

It is found in the cytoplasm. The enzyme catalyses (sulfur carrier)-H + L-cysteine = (sulfur carrier)-SH + L-alanine. Its pathway is cofactor biosynthesis; iron-sulfur cluster biosynthesis. In terms of biological role, master enzyme that delivers sulfur to a number of partners involved in Fe-S cluster assembly, tRNA modification or cofactor biosynthesis. Catalyzes the removal of elemental sulfur atoms from cysteine to produce alanine. Functions as a sulfur delivery protein for Fe-S cluster synthesis onto IscU, an Fe-S scaffold assembly protein, as well as other S acceptor proteins. The protein is Cysteine desulfurase IscS of Aeromonas hydrophila subsp. hydrophila (strain ATCC 7966 / DSM 30187 / BCRC 13018 / CCUG 14551 / JCM 1027 / KCTC 2358 / NCIMB 9240 / NCTC 8049).